The primary structure comprises 229 residues: E3 ubiquitin ligase TRIM40 (229 aa).

Residues Cys14–Arg57 form an RING-type zinc finger. The B box-type zinc finger occupies Gly66–Ile107. Positions 71, 74, 93, and 99 each coordinate Zn(2+). The stretch at Ile107–Glu154 forms a coiled coil.

It belongs to the TRIM/RBCC family. Interacts with NEDD8.

The enzyme catalyses S-ubiquitinyl-[E2 ubiquitin-conjugating enzyme]-L-cysteine + [acceptor protein]-L-lysine = [E2 ubiquitin-conjugating enzyme]-L-cysteine + N(6)-ubiquitinyl-[acceptor protein]-L-lysine.. Functionally, E3 ubiquitin-protein ligase that plays a role in the limitation of the innate immune response. Mediates inhibition of the RLR signaling pathway by ubiquitinating RIGI and IFIH1 receptors, leading to their proteasomal degradation. Also promotes the neddylation of IKBKG/NEMO, stabilizing NFKBIA, and thereby inhibiting of NF-kappa-B nuclear translocation and activation. In Pan troglodytes (Chimpanzee), this protein is E3 ubiquitin ligase TRIM40 (TRIM40).